A 183-amino-acid polypeptide reads, in one-letter code: NADH-quinone oxidoreductase subunit A (183 aa).

A run of 3 helical transmembrane segments spans residues 11 to 31, 63 to 83, and 98 to 118; these read IIAF…VPLL, FYLV…LYAW, and VVIF…VGAL. Positions 159–183 are disordered; sequence TGQIPAQSSGRVKSKTTPALSSEKE.

This sequence belongs to the complex I subunit 3 family. In terms of assembly, NDH-1 is composed of 14 different subunits. Subunits NuoA, H, J, K, L, M, N constitute the membrane sector of the complex.

Its subcellular location is the cell inner membrane. The enzyme catalyses a quinone + NADH + 5 H(+)(in) = a quinol + NAD(+) + 4 H(+)(out). In terms of biological role, NDH-1 shuttles electrons from NADH, via FMN and iron-sulfur (Fe-S) centers, to quinones in the respiratory chain. The immediate electron acceptor for the enzyme in this species is believed to be ubiquinone. Couples the redox reaction to proton translocation (for every two electrons transferred, four hydrogen ions are translocated across the cytoplasmic membrane), and thus conserves the redox energy in a proton gradient. The sequence is that of NADH-quinone oxidoreductase subunit A from Acinetobacter baumannii (strain AYE).